The chain runs to 608 residues: Glutamine--fructose-6-phosphate aminotransferase [isomerizing] (608 aa).

Catalysis depends on cysteine 2, which acts as the Nucleophile; for GATase activity. Residues 2 to 217 (CGIVGIVGTQ…DGDCAIVTRD (216 aa)) enclose the Glutamine amidotransferase type-2 domain. 2 consecutive SIS domains span residues 281–422 (ADKA…ARGT) and 456–598 (LSRD…VDQP). Residue lysine 603 is the For Fru-6P isomerization activity of the active site.

In terms of assembly, homodimer.

Its subcellular location is the cytoplasm. The catalysed reaction is D-fructose 6-phosphate + L-glutamine = D-glucosamine 6-phosphate + L-glutamate. Catalyzes the first step in hexosamine metabolism, converting fructose-6P into glucosamine-6P using glutamine as a nitrogen source. This chain is Glutamine--fructose-6-phosphate aminotransferase [isomerizing], found in Agrobacterium fabrum (strain C58 / ATCC 33970) (Agrobacterium tumefaciens (strain C58)).